Consider the following 471-residue polypeptide: Thiohydroximate-O-sulfate sulfur/sulfate-lyase (nitrile-forming) NSP2 (471 aa).

The Jacalin-type lectin domain maps to 2 to 144 (VQKVEARGGE…LHSLGAYISS (143 aa)). 6 Kelch repeats span residues 178–226 (KIFS…VRMV), 231–277 (SLYV…SMTA), 281–330 (NVYV…VVQG), 332–379 (VWVV…VVGK), 381–435 (ILVF…GWSA), and 446–471 (GLVM…VDSA). Arg-238 acts as the Proton donor in catalysis. 5 residues coordinate a (Z)-N-(sulfonatooxy)alkanimidothioate: Arg-238, Ser-271, Arg-293, Gly-322, and Val-371. Arg-293 (proton donor) is an active-site residue. Residues Glu-387, Asp-391, and His-395 each contribute to the Fe(2+) site. Position 433 (Trp-433) interacts with a (Z)-N-(sulfonatooxy)alkanimidothioate.

This sequence belongs to the jacalin lectin family. It depends on Fe(2+) as a cofactor. As to expression, expressed only in seeds.

The catalysed reaction is a (Z)-N-(sulfonatooxy)alkanimidothioate = a nitrile + sulfur + sulfate. The enzyme catalyses (Z)-phenyl-N-(sulfonatooxy)methanimidothioate = phenylacetonitrile + sulfur + sulfate. It catalyses the reaction (Z)-N-(sulfonatooxy)prop-2-enimidothioate = but-3-enenitrile + sulfur + sulfate. It carries out the reaction (Z)-(indol-3-yl)-N-(sulfonatooxy)methanimidothioate = (indol-3-yl)acetonitrile + sulfur + sulfate. Its activity is regulated as follows. The presence of Fe(2+) supports lyase activity in a dose-dependent manner with both benzylglucosinolate and 2-propenylglucosinolate as substrates. More active at pH 7.4 than at pH 6. In terms of biological role, specifier protein responsible for constitutive and herbivore-induced simple nitrile formation, especially in seeds. Promotes simple nitriles, but not epithionitrile or thiocyanate formation. Converts allylglucosinolate (allyl-GSL), 2-propenylglucosinolate (sinigrin), indol-3-ylmethylglucosinolate (glucobrassicin), benzylisothiocyanate and benzylglucosinolate (glucotropaeolin) to their corresponding simple nitriles in the presence of myrosinase. Catalyzes mainly the conversion of benzylisothiocyanate when benzylglucosinolate is used as the initial substrate of myrosinase. Involved in the regulation of glucosinolate content in seeds, during stratification and germination. The polypeptide is Thiohydroximate-O-sulfate sulfur/sulfate-lyase (nitrile-forming) NSP2 (Arabidopsis thaliana (Mouse-ear cress)).